The chain runs to 244 residues: DNA repair protein RecO (244 aa).

Belongs to the RecO family.

Functionally, involved in DNA repair and RecF pathway recombination. This is DNA repair protein RecO from Koribacter versatilis (strain Ellin345).